Consider the following 213-residue polypeptide: Cytidylate kinase (213 aa).

9–17 (GPAASGKGT) provides a ligand contact to ATP.

The protein belongs to the cytidylate kinase family. Type 1 subfamily.

The protein localises to the cytoplasm. The enzyme catalyses CMP + ATP = CDP + ADP. The catalysed reaction is dCMP + ATP = dCDP + ADP. The polypeptide is Cytidylate kinase (Caulobacter vibrioides (strain ATCC 19089 / CIP 103742 / CB 15) (Caulobacter crescentus)).